The sequence spans 581 residues: Proline--tRNA ligase (581 aa).

The protein belongs to the class-II aminoacyl-tRNA synthetase family. ProS type 1 subfamily. Homodimer.

It is found in the cytoplasm. It catalyses the reaction tRNA(Pro) + L-proline + ATP = L-prolyl-tRNA(Pro) + AMP + diphosphate. Functionally, catalyzes the attachment of proline to tRNA(Pro) in a two-step reaction: proline is first activated by ATP to form Pro-AMP and then transferred to the acceptor end of tRNA(Pro). As ProRS can inadvertently accommodate and process non-cognate amino acids such as alanine and cysteine, to avoid such errors it has two additional distinct editing activities against alanine. One activity is designated as 'pretransfer' editing and involves the tRNA(Pro)-independent hydrolysis of activated Ala-AMP. The other activity is designated 'posttransfer' editing and involves deacylation of mischarged Ala-tRNA(Pro). The misacylated Cys-tRNA(Pro) is not edited by ProRS. The sequence is that of Proline--tRNA ligase from Methylibium petroleiphilum (strain ATCC BAA-1232 / LMG 22953 / PM1).